The primary structure comprises 125 residues: Large-conductance mechanosensitive channel (125 aa).

The next 2 helical transmembrane spans lie at 14 to 34 (VIDL…VQSL) and 67 to 87 (GSFL…FLIV).

It belongs to the MscL family. In terms of assembly, homopentamer.

The protein localises to the cell membrane. Channel that opens in response to stretch forces in the membrane lipid bilayer. May participate in the regulation of osmotic pressure changes within the cell. The polypeptide is Large-conductance mechanosensitive channel (Lactobacillus helveticus (strain DPC 4571)).